The sequence spans 116 residues: NADH-ubiquinone oxidoreductase chain 3 (116 aa).

A run of 3 helical transmembrane segments spans residues 3-23 (LILAGLLIMSILSMILAMIAF), 56-76 (FFLVAILFLLFDLEIALLLPL), and 85-105 (PTLALTWTTSIIALLTLGLIH).

This sequence belongs to the complex I subunit 3 family.

It localises to the mitochondrion membrane. The catalysed reaction is a ubiquinone + NADH + 5 H(+)(in) = a ubiquinol + NAD(+) + 4 H(+)(out). Its function is as follows. Core subunit of the mitochondrial membrane respiratory chain NADH dehydrogenase (Complex I) that is believed to belong to the minimal assembly required for catalysis. Complex I functions in the transfer of electrons from NADH to the respiratory chain. The immediate electron acceptor for the enzyme is believed to be ubiquinone. This chain is NADH-ubiquinone oxidoreductase chain 3 (MT-ND3), found in Latimeria chalumnae (Coelacanth).